Here is a 1252-residue protein sequence, read N- to C-terminus: HEAT repeat-containing protein 6 (1252 aa).

An HEAT 1 repeat occupies 230-269 (PDLLGKSGLLMKLSDVTHSDPEVRRAAVHCMANLCLSVPG). Positions 365–417 (DGRSPVKPQQPESSAARPSANKKKKYKVKPKKTQQGEKAEEEEPYGEVDAAPG) are disordered. The span at 384 to 396 (ANKKKKYKVKPKK) shows a compositional bias: basic residues. A phosphoserine mark is found at Ser-471 and Ser-474. 3 HEAT repeats span residues 524 to 562 (ELGS…GSKQ), 586 to 624 (SSIR…NAPY), and 630 to 667 (SLLT…THAP). Phosphothreonine is present on Thr-689. Phosphoserine is present on Ser-714.

The protein is HEAT repeat-containing protein 6 (Heatr6) of Rattus norvegicus (Rat).